The primary structure comprises 585 residues: Rhizobactin siderophore biosynthesis protein RhbC (585 aa).

This sequence belongs to the IucA/IucC family.

Its pathway is siderophore biosynthesis; rhizobactin biosynthesis. This is Rhizobactin siderophore biosynthesis protein RhbC (rhbC) from Rhizobium meliloti (strain 1021) (Ensifer meliloti).